A 513-amino-acid chain; its full sequence is GMP synthase [glutamine-hydrolyzing] (513 aa).

Residues leucine 9 to glutamine 198 form the Glutamine amidotransferase type-1 domain. Cysteine 86 (nucleophile) is an active-site residue. Active-site residues include histidine 172 and glutamate 174. Residues tryptophan 199–arginine 388 form the GMPS ATP-PPase domain. Serine 226–serine 232 contacts ATP.

As to quaternary structure, homodimer.

The catalysed reaction is XMP + L-glutamine + ATP + H2O = GMP + L-glutamate + AMP + diphosphate + 2 H(+). The protein operates within purine metabolism; GMP biosynthesis; GMP from XMP (L-Gln route): step 1/1. In terms of biological role, catalyzes the synthesis of GMP from XMP. The protein is GMP synthase [glutamine-hydrolyzing] of Staphylococcus aureus (strain MSSA476).